Consider the following 108-residue polypeptide: Synaptic plasticity regulator PANTS (108 aa).

Residues 58–108 (KNHSTQAKDSLQESERKRLADQRKFTPVWELRQKPPSDWHLPLNQGEPQDP) are disordered. Residues 67–81 (SLQESERKRLADQRK) are compositionally biased toward basic and acidic residues.

Belongs to the UPF0545 family. In terms of processing, rapidly degraded by proteolysis following neuronal stimulation, resulting in increased AMPA receptor clustering.

The protein localises to the synapse. It localises to the synaptic cleft. Its function is as follows. Negatively regulates long-term potentiation and modulates adult synaptic plasticity. This Danio rerio (Zebrafish) protein is Synaptic plasticity regulator PANTS.